The following is an 809-amino-acid chain: LPS-assembly protein LptD (809 aa).

An N-terminal signal peptide occupies residues 1–22 (MRRALRLLPLPLSIAICLPAMA).

The protein belongs to the LptD family. As to quaternary structure, component of the lipopolysaccharide transport and assembly complex. Interacts with LptE and LptA.

It is found in the cell outer membrane. Together with LptE, is involved in the assembly of lipopolysaccharide (LPS) at the surface of the outer membrane. This chain is LPS-assembly protein LptD, found in Xanthomonas campestris pv. campestris (strain 8004).